Reading from the N-terminus, the 297-residue chain is Halorhodopsin (297 aa).

Residues 1-31 (MRSRTYHDQSVCGPYGSQRTDCDRDTDAGSD) are disordered. Over 1–45 (MRSRTYHDQSVCGPYGSQRTDCDRDTDAGSDTDVHGAQVATQIRT) the chain is Extracellular. Residues 46–71 (DTLLHSSLWVNIALAGLSILVFLYMA) traverse the membrane as a helical segment. At 72-77 (RTVRAN) the chain is on the cytoplasmic side. A helical membrane pass occupies residues 78–101 (RARLIVGATLMIPLVSLSSYLGLV). The Extracellular segment spans residues 102-125 (TGLTAGPIEMPAAHALAGEDVLSQ). A helical membrane pass occupies residues 126–147 (WGRYLTWTLSTPMILLALGWLA). At 148-150 (EVD) the chain is on the cytoplasmic side. A helical transmembrane segment spans residues 151–174 (TADLFVVIAADIGMCLTGLAAALT). The Extracellular segment spans residues 175–177 (TSS). A helical transmembrane segment spans residues 178–200 (YAFRWAFYLVSTAFFVVVLYALL). Residues 201–212 (AKWPTNAEAAGT) are Cytoplasmic-facing. The helical transmembrane segment at 213–236 (GDIFGTLRWLTVILWLGYPILWAL) threads the bilayer. The Extracellular segment spans residues 237-246 (GVEGFALVDS). A helical membrane pass occupies residues 247-275 (VGLTSWGYSLLDIGAKYLFAALLLRWVAN). Residue Lys262 is modified to N6-(retinylidene)lysine. Topologically, residues 276–297 (NERTIAVGQRSGRGAIGDPVED) are cytoplasmic.

It belongs to the archaeal/bacterial/fungal opsin family.

Its subcellular location is the cell membrane. Its function is as follows. Light-driven chloride pump. This Haloterrigena sp. (strain arg-4) protein is Halorhodopsin (hop).